The following is a 292-amino-acid chain: Nucleotide-binding protein SACE_2139 (292 aa).

15-22 (GLSGAGRS) serves as a coordination point for ATP. 66–69 (DVRS) serves as a coordination point for GTP.

Belongs to the RapZ-like family.

Displays ATPase and GTPase activities. The chain is Nucleotide-binding protein SACE_2139 from Saccharopolyspora erythraea (strain ATCC 11635 / DSM 40517 / JCM 4748 / NBRC 13426 / NCIMB 8594 / NRRL 2338).